Reading from the N-terminus, the 197-residue chain is Translation initiation factor IF-3 (197 aa).

This sequence belongs to the IF-3 family. As to quaternary structure, monomer.

Its subcellular location is the cytoplasm. IF-3 binds to the 30S ribosomal subunit and shifts the equilibrium between 70S ribosomes and their 50S and 30S subunits in favor of the free subunits, thus enhancing the availability of 30S subunits on which protein synthesis initiation begins. The protein is Translation initiation factor IF-3 of Prosthecochloris aestuarii (strain DSM 271 / SK 413).